The sequence spans 622 residues: E3 ubiquitin-protein ligase hrd-1 (622 aa).

Residues 1-23 (MRVSAGLMIGGSCVATAATVLNA) form the signal peptide. Topologically, residues 24-41 (FVINKQFYPSIVYLSKSN) are lumenal. Residues 42-62 (ASMAVLYFQGIVLVYLMFQLL) traverse the membrane as a helical segment. Topologically, residues 63-99 (KSILFGDLRAAEAEHLSERTWHAVLETCLAFTVFRDD) are cytoplasmic. The chain crosses the membrane as a helical span at residues 100–120 (FSAMFVMQFIGLLFIKCFHWL). At 121 to 141 (ADDRVDMMERSPVITLRFHLR) the chain is on the lumenal side. Residues 142-162 (MMTVLAALGFADSYFVSSAYF) form a helical membrane-spanning segment. Residues 163–170 (STITKGAS) lie on the Cytoplasmic side of the membrane. A helical transmembrane segment spans residues 171–191 (SQIVFGFEYAILLALVLHVTI). The Lumenal portion of the chain corresponds to 192-215 (KYLLHMHDLRNPQSWDNKAVYLLY). The chain crosses the membrane as a helical span at residues 216 to 236 (AELLINLIRCVLYGFFAVIML). Over 237-622 (RVHTFPLFSV…RFPPPNPEHE (386 aa)) the chain is Cytoplasmic. Residues 292-333 (CIICREEMTVESSPKRLPCSHVFHAHCLRSWFQRQQTCPTCR) form an RING-type; atypical zinc finger. The segment covering 436 to 445 (MPPPPIPQPN) has biased composition (pro residues). Disordered regions lie at residues 436–463 (MPPPPIPQPNAAPGESSNAEPPGRPNFD) and 514–622 (PVPT…PEHE). The span at 526–538 (ATASSVPTSVPSE) shows a compositional bias: low complexity. Residues 562–577 (FNDTQSTSTPSTSAGP) are compositionally biased toward polar residues. The segment covering 579–596 (PSLTPSTSSVPSTSSVRT) has biased composition (low complexity).

It belongs to the HRD1 family. Homodimer.

It is found in the endoplasmic reticulum membrane. The enzyme catalyses S-ubiquitinyl-[E2 ubiquitin-conjugating enzyme]-L-cysteine + [acceptor protein]-L-lysine = [E2 ubiquitin-conjugating enzyme]-L-cysteine + N(6)-ubiquitinyl-[acceptor protein]-L-lysine.. Its pathway is protein modification; protein ubiquitination. In terms of biological role, acts as an E3 ubiquitin-protein ligase which accepts ubiquitin specifically from endoplasmic reticulum-associated ubc-7 E2 ligase and transfers it to substrates, promoting their degradation. Component of the endoplasmic reticulum quality control (ERQC) system, which is also called the ER-associated degradation (ERAD) system, involved in ubiquitin-dependent degradation of misfolded endoplasmic reticulum proteins. Also promotes the degradation of normal but naturally short-lived proteins. Protects cells from ER stress-induced apoptosis. Thought to play a role together with hsp-3 in developmental growth and function of intestinal cells and to play a role together with hsp-4 in gonad formation. The protein is E3 ubiquitin-protein ligase hrd-1 of Caenorhabditis briggsae.